The following is a 561-amino-acid chain: DNA ligase B (561 aa).

Lys-128 (N6-AMP-lysine intermediate) is an active-site residue.

It belongs to the NAD-dependent DNA ligase family. LigB subfamily.

The catalysed reaction is NAD(+) + (deoxyribonucleotide)n-3'-hydroxyl + 5'-phospho-(deoxyribonucleotide)m = (deoxyribonucleotide)n+m + AMP + beta-nicotinamide D-nucleotide.. Catalyzes the formation of phosphodiester linkages between 5'-phosphoryl and 3'-hydroxyl groups in double-stranded DNA using NAD as a coenzyme and as the energy source for the reaction. In Pseudomonas syringae pv. syringae (strain B728a), this protein is DNA ligase B.